Here is a 411-residue protein sequence, read N- to C-terminus: Meiotically up-regulated gene 147 protein (411 aa).

Disordered regions lie at residues 1–52, 102–137, and 156–191; these read MLAQ…FENK, EREE…ELAD, and HQHE…HYES. The segment covering 33-43 has biased composition (polar residues); that stretch reads TQNESNLQQSE. Basic and acidic residues predominate over residues 156 to 172; the sequence is HQHEDEFSSSNKDKGFT.

The protein localises to the cytoplasm. Its subcellular location is the nucleus. Has a role in meiosis. This Schizosaccharomyces pombe (strain 972 / ATCC 24843) (Fission yeast) protein is Meiotically up-regulated gene 147 protein (mug147).